The sequence spans 241 residues: Keratin-associated protein 5-5 (241 aa).

Tandem repeats lie at residues 35–38, 41–44, 47–50, 105–108, 115–118, 133–136, 143–146, 161–164, 171–174, 181–184, 191–194, 201–204, 211–214, 221–224, and 231–234. Residues 35–234 form a 15 X 4 AA repeats of C-C-X-P region; it reads CCKPVCCCKP…CCCQSSCCAP (200 aa).

It belongs to the KRTAP type 5 family. In terms of assembly, interacts with hair keratins.

Functionally, in the hair cortex, hair keratin intermediate filaments are embedded in an interfilamentous matrix, consisting of hair keratin-associated protein (KRTAP), which are essential for the formation of a rigid and resistant hair shaft through their extensive disulfide bond cross-linking with abundant cysteine residues of hair keratins. The matrix proteins include the high-sulfur and high-glycine-tyrosine keratins. This chain is Keratin-associated protein 5-5, found in Mus musculus (Mouse).